The following is a 773-amino-acid chain: MEITTKSSTTTDDLNNNNNKTVTPIKSENSATGHTSPPNNSTTTTTSSTSAQPITVLPTEIIKTFEHLLRKSQRLFIGLRDLPQFGRQWQPFFQKTFELYTKLWKFQQQYRSILEDKSKYGLKRCEIGEIASKIGQLYYHYYLRTSDTNYLNESYIFYEAIRLRSYFKDVSLDKTPDMMVKQLRYYARFIVVCLLLNKKKVVFDLIEELLKHVNDYTKIYKPSDAQEWSLVLQEIFSFLQADQCATFSDTNQSPSLTNSGNIINNNSNSNNNNGEHTNNTVQSHRLNHLNCPSPPFPLESTQILQQAILVGSQQNQIKFSEITLDMFRMTQSLEYEPMSEAKENDMKLKQQLTALQQQQQQQAAEAKEKNNGTDQQNTTIPSQPLQQHLHHQQQQQQNGNGSGIKKRNPHKYLLYRPTISQILLFLSYSFKELGDNKAMLLYICADGFTNEDNHVNQHIQPPPSIQQETVPSLIDDSNTNIPITTTATATNPLYNKLFTKGLTLNMQKPSQAINSPTVNNNNNNTTTNVTVPTTTTTATNVTAQTTTTTTTTNSTSTSTTSNIPIYKYNEAPFNTKVESLYPMDLLPFCRKPFFLIVNSQSSDIFNELPTFNQPFVSLLSPQSIPKKLVSNLKCGNLFTFFLHDPISAFCDISCGNKIPSKTFNNISLLAQNSLEIISKLLFECVDLHPSFSFFLLDDFLRSFIIRFIFCHATFYLHKEFQDNIYQVKSNPPLPKSLLYNQSILKSIHQLVSELDVSDQFLGLNENRLVIHEN.

Over residues Met-1–Thr-23 the composition is skewed to low complexity. 4 disordered regions span residues Met-1–Ala-51, Thr-250–Thr-280, Thr-353–Asn-408, and Ile-513–Pro-532. The span at Pro-24–His-34 shows a compositional bias: polar residues. Composition is skewed to low complexity over residues Thr-35–Ser-50, Asn-258–Gly-274, and Thr-353–Ala-364. Positions Gly-372–Ser-382 are enriched in polar residues. Low complexity-rich tracts occupy residues Gln-383–Gln-397 and Asn-514–Pro-532.

Belongs to the SCAI family.

The protein resides in the nucleus. It localises to the cytoplasm. In terms of biological role, may function as a transcriptional cofactor with a repressor activity. In Dictyostelium discoideum (Social amoeba), this protein is Protein SCAI homolog (scai).